Consider the following 139-residue polypeptide: Cytochrome c2 (139 aa).

An N-terminal signal peptide occupies residues methionine 1–alanine 25. At glutamine 26 the chain carries Pyrrolidone carboxylic acid. Residues cysteine 38, cysteine 41, histidine 42, and methionine 118 each contribute to the heme c site.

Belongs to the cytochrome c family. Binds 1 heme c group covalently per subunit.

In terms of biological role, cytochrome c2 is found mainly in purple, non-sulfur, photosynthetic bacteria where it functions as the electron donor to the oxidized bacteriochlorophyll in the photophosphorylation pathway. However, it may also have a role in the respiratory chain and is found in some non-photosynthetic bacteria. This chain is Cytochrome c2 (cycA), found in Rhodopseudomonas palustris (strain ATCC BAA-98 / CGA009).